The primary structure comprises 276 residues: 2-dehydro-3-deoxyphosphooctonate aldolase (276 aa).

This sequence belongs to the KdsA family.

Its subcellular location is the cytoplasm. It carries out the reaction D-arabinose 5-phosphate + phosphoenolpyruvate + H2O = 3-deoxy-alpha-D-manno-2-octulosonate-8-phosphate + phosphate. It functions in the pathway carbohydrate biosynthesis; 3-deoxy-D-manno-octulosonate biosynthesis; 3-deoxy-D-manno-octulosonate from D-ribulose 5-phosphate: step 2/3. It participates in bacterial outer membrane biogenesis; lipopolysaccharide biosynthesis. The protein is 2-dehydro-3-deoxyphosphooctonate aldolase of Helicobacter pylori (strain Shi470).